The chain runs to 811 residues: Glycerol-3-phosphate acyltransferase (811 aa).

Residues 308–313 (CHRSHM) carry the HXXXXD motif motif.

It belongs to the GPAT/DAPAT family.

Its subcellular location is the cell inner membrane. It catalyses the reaction sn-glycerol 3-phosphate + an acyl-CoA = a 1-acyl-sn-glycero-3-phosphate + CoA. Its pathway is phospholipid metabolism; CDP-diacylglycerol biosynthesis; CDP-diacylglycerol from sn-glycerol 3-phosphate: step 1/3. This chain is Glycerol-3-phosphate acyltransferase, found in Pseudoalteromonas atlantica (strain T6c / ATCC BAA-1087).